Reading from the N-terminus, the 198-residue chain is MYDYIKGQLTKITAKYIVVEANGLGYMITVANPYSFTDCVNQQVTIYLHQVIREDAQLLFGFHSEEEKDVFLKLISVSGIGPTTALAIVAVDDNRGLVNAIDNSDIKYLMRFPKIGKKTAQQMVLDLAGKFVEAPKEESSKPPKAKQQGNEQLDEAVEALLALGYKATELKKIRAFFEGTSETAEQYIKSALKMLMKG.

Residues 1-63 (MYDYIKGQLT…EDAQLLFGFH (63 aa)) are domain I. The tract at residues 64 to 142 (SEEEKDVFLK…EAPKEESSKP (79 aa)) is domain II. Positions 143-147 (PKAKQ) are flexible linker. Residues 148-198 (QGNEQLDEAVEALLALGYKATELKKIRAFFEGTSETAEQYIKSALKMLMKG) are domain III.

It belongs to the RuvA family. In terms of assembly, homotetramer. Forms an RuvA(8)-RuvB(12)-Holliday junction (HJ) complex. HJ DNA is sandwiched between 2 RuvA tetramers; dsDNA enters through RuvA and exits via RuvB. An RuvB hexamer assembles on each DNA strand where it exits the tetramer. Each RuvB hexamer is contacted by two RuvA subunits (via domain III) on 2 adjacent RuvB subunits; this complex drives branch migration. In the full resolvosome a probable DNA-RuvA(4)-RuvB(12)-RuvC(2) complex forms which resolves the HJ.

Its subcellular location is the cytoplasm. The RuvA-RuvB-RuvC complex processes Holliday junction (HJ) DNA during genetic recombination and DNA repair, while the RuvA-RuvB complex plays an important role in the rescue of blocked DNA replication forks via replication fork reversal (RFR). RuvA specifically binds to HJ cruciform DNA, conferring on it an open structure. The RuvB hexamer acts as an ATP-dependent pump, pulling dsDNA into and through the RuvAB complex. HJ branch migration allows RuvC to scan DNA until it finds its consensus sequence, where it cleaves and resolves the cruciform DNA. The sequence is that of Holliday junction branch migration complex subunit RuvA from Streptococcus equi subsp. zooepidemicus (strain H70).